A 500-amino-acid chain; its full sequence is Ferulic acid decarboxylase 1 (500 aa).

3 residues coordinate Mn(2+): Asn168, His191, and Glu233. Prenylated FMN is bound by residues 168 to 173, 190 to 191, and Glu233; these read NWSIAR and QH. Glu282 (proton donor) is an active-site residue. Lys391 provides a ligand contact to prenylated FMN.

This sequence belongs to the UbiD family. UbiD-like/FDC subfamily. As to quaternary structure, homodimer. May form higher order oligomers. The cofactor is Mn(2+). Prenylated FMN is required as a cofactor.

It is found in the cytoplasm. The enzyme catalyses (E)-4-coumarate + H(+) = 4-vinylphenol + CO2. The catalysed reaction is (E)-cinnamate + H(+) = styrene + CO2. It catalyses the reaction (E)-ferulate + H(+) = 2-methoxy-4-vinylphenol + CO2. In terms of biological role, catalyzes the reversible decarboxylation of aromatic carboxylic acids like ferulic acid, p-coumaric acid or cinnamic acid, producing the corresponding vinyl derivatives 4-vinylphenol, 4-vinylguaiacol, and styrene, respectively, which play the role of aroma metabolites. In Aspergillus niger (strain ATCC MYA-4892 / CBS 513.88 / FGSC A1513), this protein is Ferulic acid decarboxylase 1.